A 490-amino-acid polypeptide reads, in one-letter code: MKAFVWTLSVLLFLLGSGHCKGGQLKIKKITQRRYPRATDGKEEAKKCSYTFLVPEQKITGPICVNTKGQDAGTIKDMITRMDLENLKDVLSRQKREIDVLQLVVDVDGNIVNEVKLLRKESRNMNSRVTQLYMQLLHEIIRKRDNSLELSQLENKILNVTTEMLKMATRYRELEVKYASLTDLVNNQSVTITVLEEQCLRMFSRQDPHASPPLVQVVPRHSPNSHQYTPGLLGGNEIQRDPGYPRDVMPPPDLPTAPTKSPFKIPAVTFINEGPFKDCQQAKEAGHSASGIYMIKPENSNGLMQLWCENSLDPGGWTVIQKRTDGSVNFFRNWENYKKGFGNIDGEYWLGLDNIYKLSNQDNYKLMIELEDWSEKKVYAEYSSFRLEPESDYYRLRLGTYQGNAGDSMMWHNGKQFTTLDRDKDTYTGNCAHFHKGGWWYNACAHSNLNGVWYRGGHYRSKHQDGIFWAEYRGGSYSLRAVQMMIKPID.

The N-terminal stretch at 1-22 is a signal peptide; the sequence is MKAFVWTLSVLLFLLGSGHCKG. Positions 79–167 form a coiled coil; sequence ITRMDLENLK…LNVTTEMLKM (89 aa). N-linked (GlcNAc...) asparagine glycans are attached at residues Asn-159 and Asn-187. The Fibrinogen C-terminal domain occupies 270–490; sequence FINEGPFKDC…AVQMMIKPID (221 aa). Cystine bridges form between Cys-279-Cys-308 and Cys-431-Cys-444.

It is found in the secreted. The polypeptide is Angiopoietin-related protein 1 (Angptl1) (Mus musculus (Mouse)).